Reading from the N-terminus, the 512-residue chain is Tyrosine-protein kinase Lyn (512 aa).

A disordered region spans residues 1–45 (MGCIKSKRKDNLNDDEVDSKTQPVRNTDRTIYVRDPTSNKQQRPV). Gly-2 is lipidated: N-myristoyl glycine. A lipid anchor (S-palmitoyl cysteine) is attached at Cys-3. Ser-19 carries the post-translational modification Phosphoserine. Residues 63–123 (EQGDIVVALY…PSNYVAKVNT (61 aa)) enclose the SH3 domain. Positions 129-226 (WFFKDITRKD…GLCRRLEKAC (98 aa)) constitute an SH2 domain. The residue at position 193 (Tyr-193) is a Phosphotyrosine. Ser-228 carries the phosphoserine modification. The Protein kinase domain maps to 247-501 (IKLVKKLGAG…YLQSVLDDFY (255 aa)). Residues 253-261 (LGAGQFGEV) and Lys-275 contribute to the ATP site. Phosphotyrosine is present on residues Tyr-306 and Tyr-316. Asp-367 serves as the catalytic Proton acceptor. Phosphotyrosine; by autocatalysis is present on Tyr-397. Phosphotyrosine occurs at positions 460 and 473. Phosphotyrosine; by autocatalysis, CSK and MATK is present on Tyr-508.

Belongs to the protein kinase superfamily. Tyr protein kinase family. SRC subfamily. As to quaternary structure, interacts with TEC. Interacts (via SH2 domain) with FLT3 (tyrosine phosphorylated). Interacts with LIME1 and with CD79A upon activation of the B-cell antigen receptor. Interacts with the B-cell receptor complex. Interacts with phosphorylated THEMIS2. Interacts with EPOR. Interacts with MS4A2/FCER1B. Interaction (via the SH2 and SH3 domains) with MUC1 is stimulated by IL7 and the subsequent phosphorylation increases the binding between MUC1 and CTNNB1/beta-catenin. Interacts with ADAM15. Interacts with NDFIP2 and more weakly with NDFIP1. Interacts with FASLG. Interacts with KIT. Interacts with HCLS1. Interacts with FCGR2B. Interacts with FCGR1A; the interaction may be indirect. Interacts with CD19, CD22, CD79A and CD79B. Interacts (via SH3 domain) with CBLC, PPP1R15A and PDE4A. Interacts with TGFB1I1. Interacts (via SH3 domain) with PIK3R1, the regulatory subunit of phosphatidylinositol 3-kinase; this interaction enhances phosphatidylinositol 3-kinase activity. Interacts with CSF2RB, the common subunit of the IL3, IL5 and CSF2 receptors. Interacts with PAG1; identified in a complex with PAG1 and STAT3. Interacts with ABL1. Interacts with PTPN6/SHP-1. Interacts (via SH3 domain) with SCIMP (via proline-rich region). This interaction facilitates the phosphorylation of SCIMP on 'Tyr-96', which enhances binding of SCIMP to TLR4, and consequently the phosphorylation of TLR4 in response to stimulation by lipopolysaccharide in macrophages. Interacts with LPXN (via LD motif 3) and the interaction is induced upon B-cell antigen receptor (BCR) activation. Interacts (via SH3-domain) with ANKRD54 (via ankyrin repeat region) in an activation-independent status of LYN. Forms a multiprotein complex with ANKRD54 and HCLS1. Interacts (via SH2 and SH3 domains) with UNC119; leading to LYN activation. Interacts with CD36. Interacts with LYN. Interacts with SKAP1 and FYB1; this interaction promotes the phosphorylation of CLNK. Interacts with BCAR1/CAS and NEDD9/HEF1. In terms of processing, ubiquitinated by CBL, leading to its degradation. Autophosphorylated. Phosphorylated on tyrosine residues in response to KIT signaling. Phosphorylation at Tyr-397 is required for optimal activity. Phosphorylation at Tyr-508 inhibits kinase activity. Phosphorylated at Tyr-508 by CSK. Dephosphorylated by PTPRC/CD45. Becomes rapidly phosphorylated upon activation of the B-cell receptor and the immunoglobulin receptor FCGR1A. Phosphorylated in response to ITGB1 in B-cells. Detected in bone marrow-derived monocytes and macrophages (at protein level). Expressed predominantly in B-lymphoid and myeloid cells.

It localises to the cell membrane. The protein resides in the nucleus. Its subcellular location is the cytoplasm. The protein localises to the perinuclear region. It is found in the golgi apparatus. It localises to the membrane. It carries out the reaction L-tyrosyl-[protein] + ATP = O-phospho-L-tyrosyl-[protein] + ADP + H(+). Its activity is regulated as follows. Subject to autoinhibition, mediated by intramolecular interactions between the SH2 domain and the C-terminal phosphotyrosine. Phosphorylation at Tyr-397 is required for optimal activity. Phosphorylated by CSK at Tyr-508; phosphorylation at Tyr-508 inhibits kinase activity. Kinase activity is modulated by dephosphorylation by PTPRC/CD45. Inhibited by dasatinib, PP2, and SU6656. In terms of biological role, non-receptor tyrosine-protein kinase that transmits signals from cell surface receptors and plays an important role in the regulation of innate and adaptive immune responses, hematopoiesis, responses to growth factors and cytokines, integrin signaling, but also responses to DNA damage and genotoxic agents. Functions primarily as negative regulator, but can also function as activator, depending on the context. Required for the initiation of the B-cell response, but also for its down-regulation and termination. Plays an important role in the regulation of B-cell differentiation, proliferation, survival and apoptosis, and is important for immune self-tolerance. Acts downstream of several immune receptors, including the B-cell receptor, CD79A, CD79B, CD5, CD19, CD22, FCER1, FCGR2, FCGR1A, TLR2 and TLR4. Plays a role in the inflammatory response to bacterial lipopolysaccharide. Mediates the responses to cytokines and growth factors in hematopoietic progenitors, platelets, erythrocytes, and in mature myeloid cells, such as dendritic cells, neutrophils and eosinophils. Acts downstream of EPOR, KIT, MPL, the chemokine receptor CXCR4, as well as the receptors for IL3, IL5 and CSF2. Plays an important role in integrin signaling. Regulates cell proliferation, survival, differentiation, migration, adhesion, degranulation, and cytokine release. Involved in the regulation of endothelial activation, neutrophil adhesion and transendothelial migration. Down-regulates signaling pathways by phosphorylation of immunoreceptor tyrosine-based inhibitory motifs (ITIM), that then serve as binding sites for phosphatases, such as PTPN6/SHP-1, PTPN11/SHP-2 and INPP5D/SHIP-1, that modulate signaling by dephosphorylation of kinases and their substrates. Phosphorylates LIME1 in response to CD22 activation. Phosphorylates BTK, CBL, CD5, CD19, CD72, CD79A, CD79B, CSF2RB, DOK1, HCLS1, MS4A2/FCER1B, SYK and TEC. Phosphorylates PIRB at Tyr-794 and Tyr-824, which is required for PIRB interaction with PTPN6/SHP-1 and PTPN11/SHP-2. Promotes phosphorylation of SIRPA, PTPN6/SHP-1, PTPN11/SHP-2 and INPP5D/SHIP-1. Required for rapid phosphorylation of FER in response to FCER1 activation. Mediates KIT phosphorylation. Acts as an effector of EPOR (erythropoietin receptor) in controlling KIT expression and may play a role in erythroid differentiation during the switch between proliferation and maturation. Depending on the context, activates or inhibits several signaling cascades. Regulates phosphatidylinositol 3-kinase activity and AKT1 activation. Regulates activation of the MAP kinase signaling cascade, including activation of MAP2K1/MEK1, MAPK1/ERK2, MAPK3/ERK1, MAPK8/JNK1 and MAPK9/JNK2. Mediates activation of STAT5A and/or STAT5B. Phosphorylates LPXN on 'Tyr-72'. Kinase activity facilitates TLR4-TLR6 heterodimerization and signal initiation. Phosphorylates SCIMP on 'Tyr-96'; this enhances binding of SCIMP to TLR4, promoting the phosphorylation of TLR4, and a selective cytokine response to lipopolysaccharide in macrophages. Phosphorylates CLNK. Phosphorylates BCAR1/CAS and NEDD9/HEF1. The protein is Tyrosine-protein kinase Lyn (Lyn) of Mus musculus (Mouse).